Here is a 255-residue protein sequence, read N- to C-terminus: uncharacterized protein (255 aa).

This sequence belongs to the IIV-6 155L family.

This is an uncharacterized protein from Acheta domesticus (House cricket).